A 246-amino-acid polypeptide reads, in one-letter code: D-erythrulose reductase (246 aa).

L13 to R41 is a binding site for NADP(+). Position 138 (S138) interacts with substrate. Catalysis depends on Y151, which acts as the Proton acceptor. Position 155 (K155) interacts with NADP(+).

The protein belongs to the short-chain dehydrogenases/reductases (SDR) family. Homotetramer. The N-terminus is blocked. Highly expressed in kidney, and also found in high amounts in liver and testis. Low expression seen in all other tissues tested.

Its subcellular location is the cytoplasm. The catalysed reaction is D-threitol + NADP(+) = D-erythrulose + NADPH + H(+). The enzyme catalyses xylitol + NADP(+) = L-xylulose + NADPH + H(+). Its function is as follows. Catalyzes the reduction of D-erythrulose to D-threitol with the concomitant oxidation of NAD(P)H to NAD(P)(+). NADH is less effective than NADPH. May also catalyze the reduction of L-xylulose. This is D-erythrulose reductase (DER) from Gallus gallus (Chicken).